Reading from the N-terminus, the 268-residue chain is Trypsin-like protease (268 aa).

An N-terminal signal peptide occupies residues 1-41 (MTHTTTIAAKRGGLALAKKAAAAGAVALAVASLQPVSAAHA). Positions 42–45 (ADAR) are cleaved as a propeptide — activation peptide. Residues 46 to 266 (VIGGKPAAQN…FAKDIAKAAS (221 aa)) form the Peptidase S1 domain. A disulfide bond links Cys-67 and Cys-83. Active-site charge relay system residues include His-82 and Asp-127. 2 disulfides stabilise this stretch: Cys-187/Cys-202 and Cys-213/Cys-242. Ser-217 functions as the Charge relay system in the catalytic mechanism.

The protein belongs to the peptidase S1 family.

In terms of biological role, protease that shows preferential cleavage after Arg and Lys residues. This Streptomyces glaucescens protein is Trypsin-like protease.